The following is a 32-amino-acid chain: ilv operon leader peptide (32 aa).

The sequence is that of ilv operon leader peptide (ilvL) from Yersinia pestis.